The primary structure comprises 352 residues: Mitochondrial ubiquitin ligase activator of NFKB 1 (352 aa).

The Cytoplasmic segment spans residues 1 to 8; sequence MESGGRPS. Residues 9-29 traverse the membrane as a helical segment; that stretch reads LCQFILLGTTSVVTAALYSVY. Residues 30–238 lie on the Mitochondrial intermembrane side of the membrane; that stretch reads RQKARVSQEL…LLQRQESSVR (209 aa). Lys-52 is covalently cross-linked (Glycyl lysine isopeptide (Lys-Gly) (interchain with G-Cter in ubiquitin)). Residues 239–259 form a helical membrane-spanning segment; sequence LWKVLALVFGFATCATLFFIL. Residues 260–352 are Cytoplasmic-facing; the sequence is RKQYLQRQER…ITRVIPLYNS (93 aa). Glycyl lysine isopeptide (Lys-Gly) (interchain with G-Cter in ubiquitin) cross-links involve residues Lys-273 and Lys-299. The RING-type zinc-finger motif lies at 302-340; it reads CVVCLSSFKSCVFLECGHVCSCTECYRALPEPKKCPICR.

Homooligomer. Interacts with MAP3K7/TAK1. Interacts with UBC9. Interacts with and sumoylates DNM1L. Interacts with MAVS. Interacts with TP53 (via N-terminus); the interaction leads to ubiquitination and proteasomal degradation of TP53. Post-translationally, ubiquitinated by PRKN during mitophagy, leading to its degradation and enhancement of mitophagy. Deubiquitinated by USP30. In terms of tissue distribution, widely expressed with highest levels in the heart, skeletal muscle, placenta, kidney and liver. Barely detectable in colon and thymus.

It is found in the mitochondrion outer membrane. It localises to the peroxisome. It carries out the reaction S-ubiquitinyl-[E2 ubiquitin-conjugating enzyme]-L-cysteine + [acceptor protein]-L-lysine = [E2 ubiquitin-conjugating enzyme]-L-cysteine + N(6)-ubiquitinyl-[acceptor protein]-L-lysine.. Its pathway is protein modification; protein ubiquitination. It functions in the pathway protein modification; protein sumoylation. In terms of biological role, exhibits weak E3 ubiquitin-protein ligase activity. E3 ubiquitin ligases accept ubiquitin from an E2 ubiquitin-conjugating enzyme in the form of a thioester and then directly transfer the ubiquitin to targeted substrates. Can ubiquitinate AKT1 preferentially at 'Lys-284' involving 'Lys-48'-linked polyubiquitination and seems to be involved in regulation of Akt signaling by targeting phosphorylated Akt to proteasomal degradation. Mediates polyubiquitination of cytoplasmic TP53 at 'Lys-24' which targets TP53 for proteasomal degradation, thus reducing TP53 levels in the cytoplasm and mitochondrion. Proposed to preferentially act as a SUMO E3 ligase at physiological concentrations. Plays a role in the control of mitochondrial morphology by promoting mitochondrial fragmentation, and influences mitochondrial localization. Likely to promote mitochondrial fission through negatively regulating the mitochondrial fusion proteins MFN1 and MFN2, acting in a pathway that is parallel to the PRKN/PINK1 regulatory pathway. May also be involved in the sumoylation of the membrane fission protein DNM1L. Inhibits cell growth. When overexpressed, activates JNK through MAP3K7/TAK1 and induces caspase-dependent apoptosis. Involved in the modulation of innate immune defense against viruses by inhibiting RIGI-dependent antiviral response. Can mediate RIGI sumoylation and disrupt its polyubiquitination. This is Mitochondrial ubiquitin ligase activator of NFKB 1 (MUL1) from Homo sapiens (Human).